Reading from the N-terminus, the 346-residue chain is Methylthioribose-1-phosphate isomerase (346 aa).

Substrate contacts are provided by residues 48–50 (RGA), arginine 88, and glutamine 192. Catalysis depends on aspartate 233, which acts as the Proton donor. Substrate is bound at residue 243 to 244 (NK).

This sequence belongs to the eIF-2B alpha/beta/delta subunits family. MtnA subfamily.

The enzyme catalyses 5-(methylsulfanyl)-alpha-D-ribose 1-phosphate = 5-(methylsulfanyl)-D-ribulose 1-phosphate. It functions in the pathway amino-acid biosynthesis; L-methionine biosynthesis via salvage pathway; L-methionine from S-methyl-5-thio-alpha-D-ribose 1-phosphate: step 1/6. In terms of biological role, catalyzes the interconversion of methylthioribose-1-phosphate (MTR-1-P) into methylthioribulose-1-phosphate (MTRu-1-P). This Alcanivorax borkumensis (strain ATCC 700651 / DSM 11573 / NCIMB 13689 / SK2) protein is Methylthioribose-1-phosphate isomerase.